The following is a 976-amino-acid chain: Leucine--tRNA ligase (976 aa).

Low complexity predominate over residues 1 to 23; sequence MTESPTTTPGSTSGAPSGVPSGV. The segment at 1 to 34 is disordered; it reads MTESPTTTPGSTSGAPSGVPSGVNDAESDAPRHR. The short motif at 86–97 is the 'HIGH' region element; it reads PYPSGEGLHVGH. The 'KMSKS' region motif lies at 745–749; the sequence is KIGKS. Position 748 (K748) interacts with ATP.

It belongs to the class-I aminoacyl-tRNA synthetase family.

Its subcellular location is the cytoplasm. The enzyme catalyses tRNA(Leu) + L-leucine + ATP = L-leucyl-tRNA(Leu) + AMP + diphosphate. The polypeptide is Leucine--tRNA ligase (Mycobacterium ulcerans (strain Agy99)).